The following is a 372-amino-acid chain: Queuine tRNA-ribosyltransferase (372 aa).

Catalysis depends on Asp-92, which acts as the Proton acceptor. Substrate is bound by residues 92–96, Asp-146, Gln-188, and Gly-215; that span reads DSGGY. The segment at 246 to 252 is RNA binding; that stretch reads GIGSLRE. Catalysis depends on Asp-265, which acts as the Nucleophile. The RNA binding; important for wobble base 34 recognition stretch occupies residues 270 to 274; it reads TRLGR. Zn(2+) is bound by residues Cys-303, Cys-305, Cys-308, and His-334.

The protein belongs to the queuine tRNA-ribosyltransferase family. In terms of assembly, homodimer. Within each dimer, one monomer is responsible for RNA recognition and catalysis, while the other monomer binds to the replacement base PreQ1. Requires Zn(2+) as cofactor.

The enzyme catalyses 7-aminomethyl-7-carbaguanine + guanosine(34) in tRNA = 7-aminomethyl-7-carbaguanosine(34) in tRNA + guanine. It functions in the pathway tRNA modification; tRNA-queuosine biosynthesis. Functionally, catalyzes the base-exchange of a guanine (G) residue with the queuine precursor 7-aminomethyl-7-deazaguanine (PreQ1) at position 34 (anticodon wobble position) in tRNAs with GU(N) anticodons (tRNA-Asp, -Asn, -His and -Tyr). Catalysis occurs through a double-displacement mechanism. The nucleophile active site attacks the C1' of nucleotide 34 to detach the guanine base from the RNA, forming a covalent enzyme-RNA intermediate. The proton acceptor active site deprotonates the incoming PreQ1, allowing a nucleophilic attack on the C1' of the ribose to form the product. After dissociation, two additional enzymatic reactions on the tRNA convert PreQ1 to queuine (Q), resulting in the hypermodified nucleoside queuosine (7-(((4,5-cis-dihydroxy-2-cyclopenten-1-yl)amino)methyl)-7-deazaguanosine). The polypeptide is Queuine tRNA-ribosyltransferase (Prochlorococcus marinus (strain MIT 9211)).